We begin with the raw amino-acid sequence, 201 residues long: Small ribosomal subunit protein uS4 (201 aa).

The 61-residue stretch at serine 91–glutamate 151 folds into the S4 RNA-binding domain.

Belongs to the universal ribosomal protein uS4 family. Part of the 30S ribosomal subunit. Contacts protein S5. The interaction surface between S4 and S5 is involved in control of translational fidelity.

Its function is as follows. One of the primary rRNA binding proteins, it binds directly to 16S rRNA where it nucleates assembly of the body of the 30S subunit. Functionally, with S5 and S12 plays an important role in translational accuracy. This Corynebacterium jeikeium (strain K411) protein is Small ribosomal subunit protein uS4.